Reading from the N-terminus, the 278-residue chain is Putative glycosyltransferase EpsE (278 aa).

This sequence belongs to the glycosyltransferase 2 family.

Its function is as follows. May be involved in the production of the exopolysaccharide (EPS) component of the extracellular matrix during biofilm formation. EPS is responsible for the adhesion of chains of cells into bundles. Required for biofilm maintenance. The sequence is that of Putative glycosyltransferase EpsE (epsE) from Bacillus subtilis (strain 168).